The primary structure comprises 159 residues: Lipoprotein signal peptidase (159 aa).

Helical transmembrane passes span 4–24, 64–84, and 88–108; these read PYFV…DQVT, MSFF…FYIK, and GNFL…GNFI. Residues Asp118 and Asp136 contribute to the active site. A helical membrane pass occupies residues 131–151; that stretch reads IFNGADSSLTIGVILVLIALL.

Belongs to the peptidase A8 family.

It localises to the cell membrane. The catalysed reaction is Release of signal peptides from bacterial membrane prolipoproteins. Hydrolyzes -Xaa-Yaa-Zaa-|-(S,diacylglyceryl)Cys-, in which Xaa is hydrophobic (preferably Leu), and Yaa (Ala or Ser) and Zaa (Gly or Ala) have small, neutral side chains.. It functions in the pathway protein modification; lipoprotein biosynthesis (signal peptide cleavage). In terms of biological role, this protein specifically catalyzes the removal of signal peptides from prolipoproteins. The polypeptide is Lipoprotein signal peptidase (Staphylococcus carnosus (strain TM300)).